Consider the following 647-residue polypeptide: Protein cueball (647 aa).

The signal sequence occupies residues 1-22 (MLWCPSVLVPLIAVAACLPVLA). Residues 23–534 (IGTPLEWEFA…CMTPSPWTSN (512 aa)) lie on the Extracellular side of the membrane. N-linked (GlcNAc...) asparagine glycosylation is found at Asn-80 and Asn-106. LDL-receptor class B repeat units follow at residues 119-166 (RNLF…DVCR), 167-211 (RKLY…DQLS), and 212-257 (DRIF…TNDA). The N-linked (GlcNAc...) asparagine glycan is linked to Asn-175. Residue Asn-316 is glycosylated (N-linked (GlcNAc...) asparagine). EGF-like domains lie at 365-401 (DEKTAQLERDHCLNGGTYIADRVLCICPTGFKGSRCE) and 436-473 (EISKCSGLCLNGGHCKLEDISEKPSCECPHNFAGERCE). Disulfide bonds link Cys-376–Cys-389, Cys-391–Cys-400, Cys-440–Cys-450, Cys-444–Cys-461, and Cys-463–Cys-472. N-linked (GlcNAc...) asparagine glycosylation is present at Asn-475. Residues 535 to 555 (VIIVLVLGIVSCFFLVAVIVH) traverse the membrane as a helical segment. The Cytoplasmic segment spans residues 556–647 (GFRRLYKPKR…LIHNMDDDLY (92 aa)).

It belongs to the cueball family.

The protein resides in the cell membrane. Functionally, has a role in spermatogenesis and oogenesis. This chain is Protein cueball, found in Drosophila pseudoobscura pseudoobscura (Fruit fly).